We begin with the raw amino-acid sequence, 150 residues long: Nascent polypeptide-associated complex subunit beta (150 aa).

2 disordered regions span residues 1-45 and 123-150; these read MADV…LQQS and YQNM…NKVE. Residues 23-32 show a composition bias toward basic residues; the sequence is TPRRKVKRAP. Positions 36–101 constitute an NAC-A/B domain; the sequence is GADDKKLQQS…GEDKELTELV (66 aa).

The protein belongs to the NAC-beta family. Part of the nascent polypeptide-associated complex (NAC), consisting of EGD2 and EGD1. NAC associates with ribosomes via EGD1.

It localises to the cytoplasm. It is found in the nucleus. Functionally, component of the nascent polypeptide-associated complex (NAC), a dynamic component of the ribosomal exit tunnel, protecting the emerging polypeptides from interaction with other cytoplasmic proteins to ensure appropriate nascent protein targeting. The NAC complex also promotes mitochondrial protein import by enhancing productive ribosome interactions with the outer mitochondrial membrane and blocks the inappropriate interaction of ribosomes translating non-secretory nascent polypeptides with translocation sites in the membrane of the endoplasmic reticulum. EGD1 may act as a transcription factor that exert a negative effect on the expression of several genes that are transcribed by RNA polymerase II. The sequence is that of Nascent polypeptide-associated complex subunit beta (EGD1) from Chaetomium globosum (strain ATCC 6205 / CBS 148.51 / DSM 1962 / NBRC 6347 / NRRL 1970) (Soil fungus).